Consider the following 246-residue polypeptide: 4-aminobenzoate synthase (246 aa).

Fe(2+) contacts are provided by glutamate 88, histidine 95, glutamate 149, histidine 181, aspartate 185, and histidine 188.

Belongs to the CADD family. Homodimer. Fe(2+) serves as cofactor. The cofactor is Mn(2+).

Its function is as follows. Involved in de novo para-aminobenzoate (PABA) biosynthesis. Acts as a self-sacrificing or 'suicide' enzyme that utilizes its own active site tyrosine residue(s) as the substrate for PABA synthesis. The side chain of the tyrosine residue is released from the protein backbone via cleavage of the C(alpha)-C(beta) bond, leaving a glycine in place of the original tyrosine residue. Reaction requires O(2) and a reduced dimetal cofactor. The protein is 4-aminobenzoate synthase of Nitrosomonas europaea (strain ATCC 19718 / CIP 103999 / KCTC 2705 / NBRC 14298).